Here is a 243-residue protein sequence, read N- to C-terminus: MTKLCLLLLPLVFLVSYSFAEEEITISISPNANPVQKPIGHQISLVCSIKKTDSNGEKPGMIWKKHGGLDRTGNVEVKKLDDYTLGLIIRNSSVEDSGVYYCQAQVGSKVYMNKMDVIVFEDIVFRDKQLHFGQVLATASVNISCEVSAKKDSVITYWTRHGKQILEGGKHKFYSRGSILEIQNYQPEQDAGQYTCEVFHVSSGSSNTKTVTLGTTGEKNYVACQQMCNSFCTDVHNKVFTNN.

The first 20 residues, 1-20 (MTKLCLLLLPLVFLVSYSFA), serve as a signal peptide directing secretion. Ig-like C2-type domains lie at 30 to 118 (PNAN…MDVI) and 133 to 212 (GQVL…KTVT). Residues Cys47 and Cys102 are joined by a disulfide bond. N-linked (GlcNAc...) asparagine glycosylation is found at Asn91 and Asn142. The cysteines at positions 145 and 196 are disulfide-linked.

Expressed in head and tail body wall muscles.

It is found in the secreted. In terms of biological role, probably not involved in maintaining the position of ASI and ASH head neuron cell bodies and ventral nerve cord axons of PVQ, PVP, RMEV, AVK and HSN neurons. The polypeptide is Zwei Ig domain protein zig-6 (Caenorhabditis elegans).